Here is a 74-residue protein sequence, read N- to C-terminus: Antimicrobial peptide HsAp4 (74 aa).

A signal peptide spans 1–21 (MSRRRILILVLVTMLVKTMAG). A propeptide spanning residues 22 to 33 (MESKWVETTYEI) is cleaved from the precursor. Arg65 is modified (arginine amide). A propeptide spanning residues 69 to 74 (AISEQT) is cleaved from the precursor.

It belongs to the non-disulfide-bridged peptide (NDBP) superfamily. Medium-length antimicrobial peptide (group 3) family. As to expression, expressed by the venom gland.

It localises to the secreted. The protein localises to the target cell membrane. Functionally, possesses antimicrobial activity against both Gram-negative and Gram-positive bacteria, as well as against the fungus C.tropicalis. Also possesses a relatively high hemolytic activity. May act by disrupting the integrity of the bacterial cell membrane. The chain is Antimicrobial peptide HsAp4 from Heterometrus spinifer (Asia giant forest scorpion).